The sequence spans 314 residues: Ecto-ADP-ribosyltransferase 4 (314 aa).

Residues 1–46 (MGPLINRCKKILLPTTVPPATMRIWLLGGLLPFLLLLSGLQRPTEG) form the signal peptide. 2 disulfides stabilise this stretch: Cys-69–Cys-280 and Cys-182–Cys-231. The 186-residue stretch at 91-276 (KNYFRMWQKA…LQLRSTGNLS (186 aa)) folds into the TR mART core domain. A glycan (N-linked (GlcNAc...) asparagine) is linked at Asn-114. Tyr-126 contributes to the NAD(+) binding site. Residue Asn-178 is glycosylated (N-linked (GlcNAc...) asparagine). Gln-206 contributes to the NAD(+) binding site. An N-linked (GlcNAc...) asparagine glycan is attached at Asn-222. NAD(+) is bound at residue Ser-240. Residues Asn-257 and Asn-274 are each glycosylated (N-linked (GlcNAc...) asparagine). Residue Ala-285 is the site of GPI-anchor amidated alanine attachment. Residues 286 to 314 (SSKKCIPDPIAIASLSFLTSVIIFSKSRV) constitute a propeptide, removed in mature form.

It belongs to the Arg-specific ADP-ribosyltransferase family. Expressed in spleen and T-cells.

It is found in the cell membrane. It catalyses the reaction L-arginyl-[protein] + NAD(+) = N(omega)-(ADP-D-ribosyl)-L-arginyl-[protein] + nicotinamide + H(+). The protein is Ecto-ADP-ribosyltransferase 4 (ART4) of Homo sapiens (Human).